Consider the following 434-residue polypeptide: Angio-associated migratory cell protein (434 aa).

The disordered stretch occupies residues 1–63 (MESESESGAA…EEEEEEGNEE (63 aa)). Residue Ser20 is modified to Phosphoserine. The segment covering 39 to 62 (DPDDLAQEMEDVDFEEEEEEEGNE) has biased composition (acidic residues). WD repeat units lie at residues 89-129 (LHSA…LLFE), 132-171 (GHKDSVTCAGFSHDSTLVATGDMSGLLKVWQVDTKEEVWS), 173-212 (EAGDLEWMEWHPRAPVLLAGTADGNTWMWKVPNGDCKTFQ), 214-254 (PNCP…HVLK), 258-299 (GHQG…GVFR), 315-354 (SESNSVESLGFCSVMPLAAVGYLDGTLAIYDLATQTLRHQ), 356-395 (QHQSGIVQLLWEAGTAVVYTCSLDGIVRLWDARTGRLLTD), and 398-433 (GHTAEILDFALSKDASLVVTTSGDHKAKVFCVQRPD).

In terms of tissue distribution, expressed in metastatic melanoma, liver, skin, kidney, heart, lung, lymph node, skeletal muscle and brain, and also in A2058 melanoma cells and activated T-cells (at protein level). Expressed in blood vessels. Strongly expressed in endothelial cells, cytotrophoblasts, and poorly differentiated. colon adenocarcinoma cells found in lymphatics.

The protein resides in the cell membrane. The protein localises to the cytoplasm. Functionally, plays a role in angiogenesis and cell migration. In smooth muscle cell migration, may act through the RhoA pathway. This chain is Angio-associated migratory cell protein (AAMP), found in Homo sapiens (Human).